Here is a 137-residue protein sequence, read N- to C-terminus: Phosphomevalonate dehydratase small subunit (137 aa).

Ser62 serves as the catalytic Proton acceptor.

It belongs to the AcnX type II small subunit family. As to quaternary structure, heterodimer composed of a large subunit (PMDh-L) and a small subunit (PMDh-S).

It catalyses the reaction (R)-5-phosphomevalonate = (2E)-3-methyl-5-phosphooxypent-2-enoate + H2O. The protein operates within isoprenoid biosynthesis; isopentenyl diphosphate biosynthesis via mevalonate pathway. Functionally, component of a hydro-lyase that catalyzes the dehydration of mevalonate 5-phosphate (MVA5P) to form trans-anhydromevalonate 5-phosphate (tAHMP). Involved in the archaeal mevalonate (MVA) pathway, which provides fundamental precursors for isoprenoid biosynthesis, such as isopentenyl diphosphate (IPP) and dimethylallyl diphosphate (DMAPP). The polypeptide is Phosphomevalonate dehydratase small subunit (Methanothrix thermoacetophila (strain DSM 6194 / JCM 14653 / NBRC 101360 / PT) (Methanosaeta thermophila)).